A 364-amino-acid polypeptide reads, in one-letter code: 4-hydroxythreonine-4-phosphate dehydrogenase (364 aa).

Substrate is bound by residues His-138 and Thr-139. Positions 169, 214, and 269 each coordinate a divalent metal cation. Residues Lys-277, Asn-286, and Arg-295 each contribute to the substrate site.

The protein belongs to the PdxA family. In terms of assembly, homodimer. A divalent metal cation serves as cofactor.

It is found in the cytoplasm. The enzyme catalyses 4-(phosphooxy)-L-threonine + NAD(+) = 3-amino-2-oxopropyl phosphate + CO2 + NADH. The protein operates within cofactor biosynthesis; pyridoxine 5'-phosphate biosynthesis; pyridoxine 5'-phosphate from D-erythrose 4-phosphate: step 4/5. Functionally, catalyzes the NAD(P)-dependent oxidation of 4-(phosphooxy)-L-threonine (HTP) into 2-amino-3-oxo-4-(phosphooxy)butyric acid which spontaneously decarboxylates to form 3-amino-2-oxopropyl phosphate (AHAP). The sequence is that of 4-hydroxythreonine-4-phosphate dehydrogenase from Bacteroides thetaiotaomicron (strain ATCC 29148 / DSM 2079 / JCM 5827 / CCUG 10774 / NCTC 10582 / VPI-5482 / E50).